Reading from the N-terminus, the 98-residue chain is Trp operon repressor homolog (98 aa).

A DNA-binding region spans residues 59-82 (QRQVSQMLGVGVATITRGSNELKA).

Belongs to the TrpR family. As to quaternary structure, homodimer.

The protein localises to the cytoplasm. This protein is an aporepressor. When complexed with L-tryptophan it binds the operator region of the trp operon and prevents the initiation of transcription. In Vibrio atlanticus (strain LGP32) (Vibrio splendidus (strain Mel32)), this protein is Trp operon repressor homolog.